Here is a 230-residue protein sequence, read N- to C-terminus: Cytochrome c oxidase subunit 2 (230 aa).

Over 1–14 the chain is Mitochondrial intermembrane; the sequence is MAHPTQLGFKDAAM. The helical transmembrane segment at 15–45 threads the bilayer; sequence PVMEELLHFHDHALMIVLLISTLVLYIITAM. The Mitochondrial matrix segment spans residues 46 to 59; sequence VSTKLTNKYILDSQ. Residues 60-87 traverse the membrane as a helical segment; it reads EIEIVWTILPAVILVLIALPSLRILYLM. At 88–230 the chain is on the mitochondrial intermembrane side; sequence DEINDPHLTI…NWSSLMLEDA (143 aa). Histidine 161, cysteine 196, glutamate 198, cysteine 200, histidine 204, and methionine 207 together coordinate Cu cation. Glutamate 198 is a Mg(2+) binding site.

The protein belongs to the cytochrome c oxidase subunit 2 family. In terms of assembly, component of the cytochrome c oxidase (complex IV, CIV), a multisubunit enzyme composed of 14 subunits. The complex is composed of a catalytic core of 3 subunits MT-CO1, MT-CO2 and MT-CO3, encoded in the mitochondrial DNA, and 11 supernumerary subunits COX4I, COX5A, COX5B, COX6A, COX6B, COX6C, COX7A, COX7B, COX7C, COX8 and NDUFA4, which are encoded in the nuclear genome. The complex exists as a monomer or a dimer and forms supercomplexes (SCs) in the inner mitochondrial membrane with NADH-ubiquinone oxidoreductase (complex I, CI) and ubiquinol-cytochrome c oxidoreductase (cytochrome b-c1 complex, complex III, CIII), resulting in different assemblies (supercomplex SCI(1)III(2)IV(1) and megacomplex MCI(2)III(2)IV(2)). Found in a complex with TMEM177, COA6, COX18, COX20, SCO1 and SCO2. Interacts with TMEM177 in a COX20-dependent manner. Interacts with COX20. Interacts with COX16. The cofactor is Cu cation.

Its subcellular location is the mitochondrion inner membrane. It carries out the reaction 4 Fe(II)-[cytochrome c] + O2 + 8 H(+)(in) = 4 Fe(III)-[cytochrome c] + 2 H2O + 4 H(+)(out). Component of the cytochrome c oxidase, the last enzyme in the mitochondrial electron transport chain which drives oxidative phosphorylation. The respiratory chain contains 3 multisubunit complexes succinate dehydrogenase (complex II, CII), ubiquinol-cytochrome c oxidoreductase (cytochrome b-c1 complex, complex III, CIII) and cytochrome c oxidase (complex IV, CIV), that cooperate to transfer electrons derived from NADH and succinate to molecular oxygen, creating an electrochemical gradient over the inner membrane that drives transmembrane transport and the ATP synthase. Cytochrome c oxidase is the component of the respiratory chain that catalyzes the reduction of oxygen to water. Electrons originating from reduced cytochrome c in the intermembrane space (IMS) are transferred via the dinuclear copper A center (CU(A)) of subunit 2 and heme A of subunit 1 to the active site in subunit 1, a binuclear center (BNC) formed by heme A3 and copper B (CU(B)). The BNC reduces molecular oxygen to 2 water molecules using 4 electrons from cytochrome c in the IMS and 4 protons from the mitochondrial matrix. The sequence is that of Cytochrome c oxidase subunit 2 (mt-co2) from Cyprinus carpio (Common carp).